A 138-amino-acid polypeptide reads, in one-letter code: Large ribosomal subunit protein uL16 (138 aa).

The span at 1–15 (MLSPRKVKYRKKQRG) shows a compositional bias: basic residues. A disordered region spans residues 1–20 (MLSPRKVKYRKKQRGRLSGE).

It belongs to the universal ribosomal protein uL16 family. Part of the 50S ribosomal subunit.

Binds 23S rRNA and is also seen to make contacts with the A and possibly P site tRNAs. This Borrelia turicatae (strain 91E135) protein is Large ribosomal subunit protein uL16.